Here is a 128-residue protein sequence, read N- to C-terminus: UPF0325 protein KPN78578_01770 (128 aa).

Belongs to the UPF0325 family.

The polypeptide is UPF0325 protein KPN78578_01770 (Klebsiella pneumoniae subsp. pneumoniae (strain ATCC 700721 / MGH 78578)).